A 563-amino-acid chain; its full sequence is Anaerobic glycerol-3-phosphate dehydrogenase subunit A (563 aa).

FAD is bound at residue 20-48 (DVIIIGGGATGAGIARDCALRGIDCILLE).

This sequence belongs to the FAD-dependent glycerol-3-phosphate dehydrogenase family. As to quaternary structure, composed of a catalytic GlpA/B dimer and of membrane bound GlpC. The cofactor is FAD. FMN serves as cofactor.

The protein resides in the cell inner membrane. It catalyses the reaction a quinone + sn-glycerol 3-phosphate = dihydroxyacetone phosphate + a quinol. The protein operates within polyol metabolism; glycerol degradation via glycerol kinase pathway; glycerone phosphate from sn-glycerol 3-phosphate (anaerobic route): step 1/1. This chain is Anaerobic glycerol-3-phosphate dehydrogenase subunit A (glpA), found in Haemophilus influenzae (strain ATCC 51907 / DSM 11121 / KW20 / Rd).